The primary structure comprises 100 residues: Serine protease inhibitor 1 protein (100 aa).

A signal peptide spans 1–20 (MKHLLIVSLVFVTIIWKIEC). 5 cysteine pairs are disulfide-bonded: Cys-42-Cys-74, Cys-51-Cys-69, Cys-54-Cys-65, Cys-58-Cys-93, and Cys-76-Cys-90. The TIL domain occupies 42 to 93 (CGLNEVWMVCSSCEEECGKTPQPCPRICQPARCQCPAHKGYRRDGQGNCIFC).

The protein localises to the secreted. In Caenorhabditis elegans, this protein is Serine protease inhibitor 1 protein.